The sequence spans 82 residues: Small ribosomal subunit protein uS15 (82 aa).

It belongs to the universal ribosomal protein uS15 family. As to quaternary structure, part of the 30S ribosomal subunit. Forms a bridge to the 50S subunit in the 70S ribosome, contacting the 23S rRNA.

One of the primary rRNA binding proteins, it binds directly to 16S rRNA where it helps nucleate assembly of the platform of the 30S subunit by binding and bridging several RNA helices of the 16S rRNA. Its function is as follows. Forms an intersubunit bridge (bridge B4) with the 23S rRNA of the 50S subunit in the ribosome. The chain is Small ribosomal subunit protein uS15 from Pelagibacter ubique (strain HTCC1062).